Here is a 452-residue protein sequence, read N- to C-terminus: Transcription factor ETV6 (452 aa).

Residues 1 to 10 are compositionally biased toward polar residues; it reads MSETPAQCSI. Positions 1 to 30 are disordered; the sequence is MSETPAQCSIKQERISYTPPESPVPSYASS. Position 11 is an N6-acetyllysine; alternate (K11). A Glycyl lysine isopeptide (Lys-Gly) (interchain with G-Cter in SUMO2); alternate cross-link involves residue K11. T18 carries the phosphothreonine modification. S22 bears the Phosphoserine mark. Residues 40–124 enclose the PNT domain; sequence ALRMEEDSIR…ELLQHILKQR (85 aa). Residues 158–262 are disordered; the sequence is VQRTPRPSVD…PKPSSPRQES (105 aa). Residues S213 and S238 each carry the phosphoserine modification. Over residues 230–250 the composition is skewed to polar residues; it reads QESYPLSVSPMENNHCPASSE. S257 carries the phosphoserine; by MAPK14 modification. A Glycyl lysine isopeptide (Lys-Gly) (interchain with G-Cter in SUMO2) cross-link involves residue K288. K302 bears the N6-acetyllysine; alternate mark. A Glycyl lysine isopeptide (Lys-Gly) (interchain with G-Cter in SUMO2); alternate cross-link involves residue K302. S323 is modified (phosphoserine). The segment at residues 339–420 is a DNA-binding region (ETS); the sequence is RLLWDYVYQL…PGQRLLFRFM (82 aa). Residues K403 and K421 each participate in a glycyl lysine isopeptide (Lys-Gly) (interchain with G-Cter in SUMO2) cross-link.

It belongs to the ETS family. Can form homodimers or heterodimers with TEL2 or FLI1. Interacts with L3MBTL1 and HDAC9. Post-translationally, phosphorylation of Ser-257 by MAPK14 (p38) inhibits ETV6 transcriptional repression. In terms of tissue distribution, ubiquitous.

It localises to the nucleus. Functionally, transcriptional repressor; binds to the DNA sequence 5'-CCGGAAGT-3'. Plays a role in hematopoiesis and malignant transformation. The protein is Transcription factor ETV6 (ETV6) of Homo sapiens (Human).